The following is a 320-amino-acid chain: 3'-5' exoribonuclease YhaM (320 aa).

Residues 18–90 (FLIKSATKAV…QLKIGSIRPT (73 aa)) constitute a DNA-binding region (OB). The HD domain maps to 163–279 (HVVCMLNVAK…LHMIDNIDAK (117 aa)).

Belongs to the YhaM family.

Shows a 3'-5' exoribonuclease activity. This is 3'-5' exoribonuclease YhaM from Halalkalibacterium halodurans (strain ATCC BAA-125 / DSM 18197 / FERM 7344 / JCM 9153 / C-125) (Bacillus halodurans).